The following is a 211-amino-acid chain: MSTNITFHASALTRSERTELRNQRGLTIWLTGLSASGKSTLAVELEHQLVRDRRVHAYRLDGDNIRFGLNKDLGFSEADRNENIRRIAEVAKLFADSNSIAITSFISPYRKDRDTARQLHEVATPGEETGLPFVEVYVDVPVEVAEQRDPKGLYKKAREGVIKEFTGISAPYEAPANPEVHVKNYELPVQDAVKQIIDYLDTKGYLPAKKE.

Residue 32 to 39 (GLSASGKS) coordinates ATP. The active-site Phosphoserine intermediate is Ser107.

It belongs to the APS kinase family. Homodimer.

The catalysed reaction is adenosine 5'-phosphosulfate + ATP = 3'-phosphoadenylyl sulfate + ADP + H(+). It participates in sulfur metabolism; hydrogen sulfide biosynthesis; sulfite from sulfate: step 2/3. In terms of biological role, catalyzes the synthesis of activated sulfate. This chain is Adenylyl-sulfate kinase, found in Penicillium chrysogenum (Penicillium notatum).